Reading from the N-terminus, the 453-residue chain is Chromosomal replication initiator protein DnaA (453 aa).

The tract at residues 1–76 (MSGDAAALWP…LAWRQQLPAV (76 aa)) is domain I, interacts with DnaA modulators. Positions 76–115 (VRSVSVRGGVAATERAATLASVPLPTFDAPAAPAANPALL) are domain II. The domain III, AAA+ region stretch occupies residues 116 to 333 (GFDPRLSFDR…GALNKLLAYA (218 aa)). ATP contacts are provided by Gly-160, Gly-162, Lys-163, and Thr-164. The interval 334–453 (ALTGARIDLM…IAAIRRSLNS (120 aa)) is domain IV, binds dsDNA.

It belongs to the DnaA family. Oligomerizes as a right-handed, spiral filament on DNA at oriC.

The protein resides in the cytoplasm. Functionally, plays an essential role in the initiation and regulation of chromosomal replication. ATP-DnaA binds to the origin of replication (oriC) to initiate formation of the DNA replication initiation complex once per cell cycle. Binds the DnaA box (a 9 base pair repeat at the origin) and separates the double-stranded (ds)DNA. Forms a right-handed helical filament on oriC DNA; dsDNA binds to the exterior of the filament while single-stranded (ss)DNA is stabiized in the filament's interior. The ATP-DnaA-oriC complex binds and stabilizes one strand of the AT-rich DNA unwinding element (DUE), permitting loading of DNA polymerase. After initiation quickly degrades to an ADP-DnaA complex that is not apt for DNA replication. Binds acidic phospholipids. This is Chromosomal replication initiator protein DnaA from Sphingopyxis alaskensis (strain DSM 13593 / LMG 18877 / RB2256) (Sphingomonas alaskensis).